We begin with the raw amino-acid sequence, 106 residues long: Chaperone modulatory protein CbpM (106 aa).

This sequence belongs to the CbpM family.

Functionally, interacts with CbpA and inhibits both the DnaJ-like co-chaperone activity and the DNA binding activity of CbpA. Together with CbpA, modulates the activity of the DnaK chaperone system. Does not inhibit the co-chaperone activity of DnaJ. This Coxiella burnetii (strain CbuK_Q154) (Coxiella burnetii (strain Q154)) protein is Chaperone modulatory protein CbpM.